The following is a 638-amino-acid chain: 1-deoxy-D-xylulose-5-phosphate synthase (638 aa).

Residues His-79 and 120–122 (AHS) contribute to the thiamine diphosphate site. Mg(2+) is bound at residue Asp-151. Thiamine diphosphate is bound by residues 152-153 (GA), Asn-180, Tyr-289, and Glu-371. Asn-180 is a Mg(2+) binding site.

This sequence belongs to the transketolase family. DXPS subfamily. Homodimer. It depends on Mg(2+) as a cofactor. The cofactor is thiamine diphosphate.

The catalysed reaction is D-glyceraldehyde 3-phosphate + pyruvate + H(+) = 1-deoxy-D-xylulose 5-phosphate + CO2. It functions in the pathway metabolic intermediate biosynthesis; 1-deoxy-D-xylulose 5-phosphate biosynthesis; 1-deoxy-D-xylulose 5-phosphate from D-glyceraldehyde 3-phosphate and pyruvate: step 1/1. In terms of biological role, catalyzes the acyloin condensation reaction between C atoms 2 and 3 of pyruvate and glyceraldehyde 3-phosphate to yield 1-deoxy-D-xylulose-5-phosphate (DXP). In Rhizobium rhizogenes (strain K84 / ATCC BAA-868) (Agrobacterium radiobacter), this protein is 1-deoxy-D-xylulose-5-phosphate synthase.